The primary structure comprises 419 residues: CDP-diacylglycerol--serine O-phosphatidyltransferase 3 (419 aa).

A disordered region spans residues 1–51; sequence MPVRRRWYPPSSTAAQPSPDGGDVNTDDADACPSSRQQRPPSLPQHSAPIH. Over residues 33–47 the composition is skewed to low complexity; that stretch reads PSSRQQRPPSLPQHS. 7 consecutive transmembrane segments (helical) span residues 103–123, 142–162, 168–188, 260–280, 287–307, 359–379, and 384–404; these read PHTVSVLLAGACLLIWASGVL, WAMIAVFLAYCTLQAPSTILI, VWRLVHGMAVVYLVALTFLLF, LLLWVLSVGFELMELTFRHML, WWDSIILDIMICNWFGIWAGM, FIQVFCLCVGFMTVELNTFFL, and WIPPRNPLVVYRLILWWLIAI.

The protein belongs to the CDP-alcohol phosphatidyltransferase class-I family.

It localises to the endoplasmic reticulum membrane. It carries out the reaction a CDP-1,2-diacyl-sn-glycerol + L-serine = a 1,2-diacyl-sn-glycero-3-phospho-L-serine + CMP + H(+). Its pathway is phospholipid metabolism; phosphatidylethanolamine biosynthesis; phosphatidylethanolamine from CDP-diacylglycerol: step 1/2. Its function is as follows. Catalyzes a base-exchange reaction in which the polar head group of phosphatidylethanolamine (PE) or phosphatidylcholine (PC) is replaced by L-serine. This chain is CDP-diacylglycerol--serine O-phosphatidyltransferase 3 (PSS3), found in Oryza sativa subsp. japonica (Rice).